The sequence spans 164 residues: Ecotin (164 aa).

The first 20 residues, methionine 1–alanine 20, serve as a signal peptide directing secretion. Cysteine 72 and cysteine 109 are joined by a disulfide.

It belongs to the protease inhibitor I11 (ecotin) family. As to quaternary structure, homodimer.

The protein resides in the periplasm. Its function is as follows. General inhibitor of pancreatic serine proteases: inhibits chymotrypsin, trypsin, elastases, factor X, kallikrein as well as a variety of other proteases. The protein is Ecotin of Salmonella paratyphi A (strain ATCC 9150 / SARB42).